Here is an 87-residue protein sequence, read N- to C-terminus: U3-theraphotoxin-Hhn1a 6 (87 aa).

The first 24 residues, 1 to 24 (MVNMKASMFLTFAGLVLLFVVCYA), serve as a signal peptide directing secretion. The propeptide occupies 25 to 52 (SESEKKEFPKEMLSSIFAVDNDFKQEER). 3 disulfide bridges follow: cysteine 54/cysteine 67, cysteine 61/cysteine 72, and cysteine 66/cysteine 79.

This sequence belongs to the neurotoxin 10 (Hwtx-1) family. 51 (Hntx-8) subfamily. Hntx-8 sub-subfamily. Expressed by the venom gland.

The protein resides in the secreted. Functionally, ion channel inhibitor. This chain is U3-theraphotoxin-Hhn1a 6, found in Cyriopagopus hainanus (Chinese bird spider).